The primary structure comprises 298 residues: Pyridoxal kinase PdxY (298 aa).

Position 17 (Ser-17) interacts with substrate. Positions 119 and 156 each coordinate ATP. Asp-234 lines the substrate pocket.

Belongs to the pyridoxine kinase family. PdxY subfamily. In terms of assembly, homodimer. Mg(2+) serves as cofactor.

The catalysed reaction is pyridoxal + ATP = pyridoxal 5'-phosphate + ADP + H(+). The protein operates within cofactor metabolism; pyridoxal 5'-phosphate salvage; pyridoxal 5'-phosphate from pyridoxal: step 1/1. In terms of biological role, pyridoxal kinase involved in the salvage pathway of pyridoxal 5'-phosphate (PLP). Catalyzes the phosphorylation of pyridoxal to PLP. The chain is Pyridoxal kinase PdxY from Deinococcus radiodurans (strain ATCC 13939 / DSM 20539 / JCM 16871 / CCUG 27074 / LMG 4051 / NBRC 15346 / NCIMB 9279 / VKM B-1422 / R1).